The following is a 1206-amino-acid chain: MNFRDHSISLDESKNACFQVIDWYHFDYTNEDSNESQYIIKMFGVTEEGYSLCVNVTDFQPHFYISSKTKDKFTQTELDDLEEYIINKLPYNFKNSLSVKQVRKKSIWGFTNNVYKQYIKLSFQNIMSMYITRKMLQYRIKVGRVQVQFDLNESNIDPFLRFIHIQNIKPGGWISIDEYTTDVDDELESKCQINITTSCENVQPLDCNKVAPVNIMSFDIECTSSSGDFPVPIKTYKKTAEEISDLYNSFKSDSHHDGFIPALYKCFMGIYTDEKEFMNDCGTYCNKNLLECNTNNIKFAKVYPKKKKIDLETIFQKLQGYTDTIVDILKNRSKHTVFQEENDGLEPSVVNQLEVLLNSFLPPLKGDPIIQIGSTIHQYGSTKCSYKNVITLDTCNDIPGVDVITCKTETALIKEWCKLIHRVDPDIMTGYNIFGFDFDYIYKRALELGCEKYVLGCSRLEGHKSKFKEKMLASSALGENLLKYVEMEGRVFVDLMKVVQREYNLDSYKLDNVASHFISGKVKTHNKTTLHLDSAAGINVGDYIKLNNTYKCMVLSVDSNIIVIDTELDEKIVTWGLAKDDVSPKEIFACQKGTSADRAKIAKYCVQDCALCNMLIIKLEVFANNMGMANVCLVPLSYIFMRGQGIKIFSLVAKQCRDDNFIIPLIKFDQDSEEVEGYEGAIVLDPIPGIYVEAPISVMDYASLYPSSMISENISHDSIVLDKKYDNLPGVEYVDVTYDIFTGVGDKKTKVDEKTCRYAQFKNNEKGVLPRILMKLLSQRKSTRKQILHKTVTTNDNRSFTGLVDENDDSVTIKTTDNNTITLSRNEILSSVDTYNDFMKAILDGLQLAYKITANSLYGQVGARTSPIYMKELAASTTATGRNLIMKAKEFMETNYGADVVYGDTDSIFVDFKVKEKYGLLDKDALQKSIDISVKASDAFKKELKAPHDLEYEKTFFPFIILSKKKYVGNLYEHDVNKYKQKSMGIVLKRRDNANIVKIVYGGIIDILLNRQNISFAINFLKESLRKLVNGEFHMDDLVITKTLRTTYKDPTRIAHKVLADRMRNRDPGSAPQSSDRVPYAYIEHDIKNKSLLQGDKIEHPSYIKENNVKIDYIFYITNQLMKPICQLMALALFQIPKSSKPEIYERKLKSLTLDYEGNKKRAIDKVSDLKQKEIQKLLFDETLVHLNNKRMGNREILEFFSVTPV.

It belongs to the DNA polymerase type-B family.

The enzyme catalyses DNA(n) + a 2'-deoxyribonucleoside 5'-triphosphate = DNA(n+1) + diphosphate. The chain is DNA polymerase (dpo) from Pyramimonas orientalis virus (PoV01).